A 778-amino-acid chain; its full sequence is Preasperterpenoid A synthase PvPS (778 aa).

A terpene cyclase region spans residues 1–414 (MAATKKSTAT…HRYNFHKPAA (414 aa)). Mg(2+)-binding residues include D176 and D180. A substrate-binding site is contributed by D176. Positions 176–180 (DDILD) match the DDXXD 1 motif. Substrate-binding positions include 266–269 (RVIN), N310, 314–318 (SWEKE), and 406–407 (RY). The NSE/DTE signature appears at 310–318 (NDYFSWEKE). Residues 414 to 431 (AKENEDTDDEGAKSDDSK) are compositionally biased toward basic and acidic residues. The tract at residues 415–778 (KENEDTDDEG…LRLLLKRLQV (364 aa)) is prenyltransferase. The tract at residues 416 to 454 (ENEDTDDEGAKSDDSKTTLNDSTDSTVVDVKTPATSGLL) is disordered. Isopentenyl diphosphate is bound by residues K499, R502, and H531. 2 residues coordinate Mg(2+): D538 and D542. The DDXXD 2 signature appears at 538 to 542 (DDIED). Dimethylallyl diphosphate is bound at residue R547. Isopentenyl diphosphate is bound at residue R548. Residues K625, T626, Q662, N669, K679, and K689 each coordinate dimethylallyl diphosphate.

This sequence in the N-terminal section; belongs to the terpene synthase family. It in the C-terminal section; belongs to the FPP/GGPP synthase family. As to quaternary structure, hexamer. It depends on Mg(2+) as a cofactor.

It catalyses the reaction isopentenyl diphosphate + (2E,6E)-farnesyl diphosphate = (2E,6E,10E)-geranylgeranyl diphosphate + diphosphate. The catalysed reaction is isopentenyl diphosphate + (2E,6E,10E)-geranylgeranyl diphosphate = (2E,6E,10E,14E)-geranylfarnesyl diphosphate + diphosphate. The enzyme catalyses (2E,6E,10E,14E)-geranylfarnesyl diphosphate = preasperterpenoid A + diphosphate. The protein operates within secondary metabolite biosynthesis; terpenoid biosynthesis. In terms of biological role, bifunctional sesterterpene synthase that possesses both prenyl transferase and terpene cyclase activity, converting isopentenyl diphosphate and dimethylallyl diphosphate into geranylfarnesyl diphosphate (GFPP) and further converting GFPP into preasperterpenoid A. The chain is Preasperterpenoid A synthase PvPS from Talaromyces verruculosus (Penicillium verruculosum).